We begin with the raw amino-acid sequence, 341 residues long: Anthranilate phosphoribosyltransferase (341 aa).

5-phospho-alpha-D-ribose 1-diphosphate-binding positions include Gly-82, 85–86, Thr-90, 92–95, 110–118, and Thr-122; these read GD, NIST, and KHGNRAITS. Anthranilate is bound at residue Gly-82. Ser-94 provides a ligand contact to Mg(2+). Residue Asn-113 participates in anthranilate binding. Residue Arg-168 participates in anthranilate binding. Positions 226 and 227 each coordinate Mg(2+).

It belongs to the anthranilate phosphoribosyltransferase family. As to quaternary structure, homodimer. Requires Mg(2+) as cofactor.

The catalysed reaction is N-(5-phospho-beta-D-ribosyl)anthranilate + diphosphate = 5-phospho-alpha-D-ribose 1-diphosphate + anthranilate. It functions in the pathway amino-acid biosynthesis; L-tryptophan biosynthesis; L-tryptophan from chorismate: step 2/5. Catalyzes the transfer of the phosphoribosyl group of 5-phosphorylribose-1-pyrophosphate (PRPP) to anthranilate to yield N-(5'-phosphoribosyl)-anthranilate (PRA). The polypeptide is Anthranilate phosphoribosyltransferase (Caulobacter vibrioides (strain ATCC 19089 / CIP 103742 / CB 15) (Caulobacter crescentus)).